We begin with the raw amino-acid sequence, 488 residues long: (S)-N-methylcoclaurine 3'-hydroxylase isozyme 2 (488 aa).

Residues 3–23 form a helical membrane-spanning segment; that stretch reads VVTVALIAVIISSILYLLFGS. C430 lines the heme pocket.

The protein belongs to the cytochrome P450 family. Requires heme as cofactor.

It localises to the endoplasmic reticulum membrane. The protein localises to the microsome membrane. The catalysed reaction is (S)-N-methylcoclaurine + reduced [NADPH--hemoprotein reductase] + O2 = (S)-3'-hydroxy-N-methylcoclaurine + oxidized [NADPH--hemoprotein reductase] + H2O + H(+). The protein operates within alkaloid biosynthesis; (S)-reticuline biosynthesis; (S)-reticuline from (S)-norcoclaurine: step 3/4. Functionally, 3'-hydroxylation of (S)-N-methylcoclaurine. In Eschscholzia californica (California poppy), this protein is (S)-N-methylcoclaurine 3'-hydroxylase isozyme 2 (CYP80B2).